The following is a 689-amino-acid chain: DNA ligase (689 aa).

NAD(+)-binding positions include 40–44 (DSEYD), 89–90 (SL), and glutamate 121. Lysine 123 functions as the N6-AMP-lysine intermediate in the catalytic mechanism. The NAD(+) site is built by arginine 144, glutamate 179, lysine 295, and lysine 319. Positions 413, 416, 431, and 437 each coordinate Zn(2+). The BRCT domain maps to 610–689 (REQSGLTDKI…EEWLTLIKNV (80 aa)).

The protein belongs to the NAD-dependent DNA ligase family. LigA subfamily. The cofactor is Mg(2+). It depends on Mn(2+) as a cofactor.

It carries out the reaction NAD(+) + (deoxyribonucleotide)n-3'-hydroxyl + 5'-phospho-(deoxyribonucleotide)m = (deoxyribonucleotide)n+m + AMP + beta-nicotinamide D-nucleotide.. In terms of biological role, DNA ligase that catalyzes the formation of phosphodiester linkages between 5'-phosphoryl and 3'-hydroxyl groups in double-stranded DNA using NAD as a coenzyme and as the energy source for the reaction. It is essential for DNA replication and repair of damaged DNA. This chain is DNA ligase, found in Rickettsia conorii (strain ATCC VR-613 / Malish 7).